A 1378-amino-acid polypeptide reads, in one-letter code: Roundabout homolog 2 (1378 aa).

A signal peptide spans 1-21 (MSLLMFTQLLLCGFLYVRVDG). At 22–859 (SRLRQEDFPP…EQITDVVKQP (838 aa)) the chain is on the extracellular side. Ig-like C2-type domains follow at residues 31–127 (PRIV…ASLE), 133–220 (DDFR…AELT), 225–309 (PTFL…ATLT), 314–409 (PQFV…LEVT), and 418–504 (PIIL…AVLD). Residues Cys-52 and Cys-110 are joined by a disulfide bond. Residue Asn-123 is glycosylated (N-linked (GlcNAc...) asparagine). 3 cysteine pairs are disulfide-bonded: Cys-154–Cys-203, Cys-246–Cys-293, and Cys-335–Cys-391. Asn-426 is a glycosylation site (N-linked (GlcNAc...) asparagine). An intrachain disulfide couples Cys-439 to Cys-488. Fibronectin type-III domains lie at 524–618 (PPSK…TQDI), 637–735 (VLVR…TEEA), and 739–836 (PPQS…IGRR). Residues 603-625 (LSDPSPMSDPVRTQDISPPAQGV) form a disordered region. Asn-752, Asn-782, Asn-789, and Asn-845 each carry an N-linked (GlcNAc...) asparagine glycan. The helical transmembrane segment at 860-880 (AFIAGIGGACWVILMGFSIWL) threads the bilayer. Topologically, residues 881–1378 (YWRRKKRKGL…NSQGQFTGEL (498 aa)) are cytoplasmic. Disordered stretches follow at residues 1032 to 1084 (GFGY…PLPG), 1124 to 1156 (EDDD…LTPS), and 1215 to 1348 (DVAD…KTEV). Residues 1058 to 1067 (SSKPQKNNGS) show a composition bias toward low complexity. A compositionally biased stretch (polar residues) spans 1141–1155 (PAISFGQQSTATLTP). Thr-1154 is modified (phosphothreonine). Ser-1156 is subject to Phosphoserine. Positions 1215–1228 (DVADDDADDEEEAL) are enriched in acidic residues. The segment covering 1240–1285 (TPGSSMDNLDSSVTGKAFTSSQRPRPTSPFSTDSNTSAALSQSQRP) has biased composition (polar residues). The span at 1319 to 1343 (SKPSFPSPGGHSSSGTASSKGSTGP) shows a compositional bias: low complexity.

Belongs to the immunoglobulin superfamily. ROBO family. As to quaternary structure, interacts with SLIT2.

It is found in the membrane. Its function is as follows. Receptor for SLIT2, and probably SLIT1, which are thought to act as molecular guidance cue in cellular migration, including axonal navigation at the ventral midline of the neural tube and projection of axons to different regions during neuronal development. The polypeptide is Roundabout homolog 2 (ROBO2) (Homo sapiens (Human)).